A 315-amino-acid chain; its full sequence is tRNA dimethylallyltransferase (315 aa).

10–17 (GPTAVGKT) contacts ATP. 12–17 (TAVGKT) provides a ligand contact to substrate. The interaction with substrate tRNA stretch occupies residues 35-38 (DSMQ).

This sequence belongs to the IPP transferase family. Monomer. Mg(2+) serves as cofactor.

The catalysed reaction is adenosine(37) in tRNA + dimethylallyl diphosphate = N(6)-dimethylallyladenosine(37) in tRNA + diphosphate. Its function is as follows. Catalyzes the transfer of a dimethylallyl group onto the adenine at position 37 in tRNAs that read codons beginning with uridine, leading to the formation of N6-(dimethylallyl)adenosine (i(6)A). The sequence is that of tRNA dimethylallyltransferase from Geobacillus kaustophilus (strain HTA426).